Here is a 410-residue protein sequence, read N- to C-terminus: Probable peptidoglycan glycosyltransferase FtsW (410 aa).

9 consecutive transmembrane segments (helical) span residues 39–59, 78–98, 108–128, 177–197, 198–218, 221–241, 303–323, 342–362, and 374–394; these read LDPL…VMVY, YFLL…LAAF, FAPW…IPGV, GFLP…GEPD, FGAF…GGIN, VFAL…WLSP, IAEE…AILI, GLVA…NMGV, and LPLM…LAIL.

Belongs to the SEDS family. FtsW subfamily.

Its subcellular location is the cell inner membrane. The catalysed reaction is [GlcNAc-(1-&gt;4)-Mur2Ac(oyl-L-Ala-gamma-D-Glu-L-Lys-D-Ala-D-Ala)](n)-di-trans,octa-cis-undecaprenyl diphosphate + beta-D-GlcNAc-(1-&gt;4)-Mur2Ac(oyl-L-Ala-gamma-D-Glu-L-Lys-D-Ala-D-Ala)-di-trans,octa-cis-undecaprenyl diphosphate = [GlcNAc-(1-&gt;4)-Mur2Ac(oyl-L-Ala-gamma-D-Glu-L-Lys-D-Ala-D-Ala)](n+1)-di-trans,octa-cis-undecaprenyl diphosphate + di-trans,octa-cis-undecaprenyl diphosphate + H(+). The protein operates within cell wall biogenesis; peptidoglycan biosynthesis. Peptidoglycan polymerase that is essential for cell division. The sequence is that of Probable peptidoglycan glycosyltransferase FtsW from Aromatoleum aromaticum (strain DSM 19018 / LMG 30748 / EbN1) (Azoarcus sp. (strain EbN1)).